The primary structure comprises 81 residues: Large ribosomal subunit protein uL24 (81 aa).

This sequence belongs to the universal ribosomal protein uL24 family. As to quaternary structure, part of the 50S ribosomal subunit.

Its function is as follows. One of two assembly initiator proteins, it binds directly to the 5'-end of the 23S rRNA, where it nucleates assembly of the 50S subunit. In terms of biological role, one of the proteins that surrounds the polypeptide exit tunnel on the outside of the subunit. The polypeptide is Large ribosomal subunit protein uL24 (Chloroherpeton thalassium (strain ATCC 35110 / GB-78)).